The following is a 354-amino-acid chain: MNSKRIIILAGGSGGHVFPGLTIAKHLIKKGWDINWIGTKNKIESEIIPKCNIKIHFIKIQGLRNSSLKNLIMTPINVLNSYLQVRKIIKNWIPDIILGMGGYVSGPGGLAAWSCKIPFILHEQNKIAGITNKLLSKISTKNMQAFSGTLLNAEIVGNPIRKNIIDIPPPIKRFKNRKGPLRILIIGGSQGASIFNKILPKISFFLQEKAIIWHQSGNNDLQKTRKKYKKYSTYKHIVSSFIKNIAEAYEWADIIISRSGALTVSEITVVGLGAIFIPYPHKDKQQYLNAEDLENNGAAKIIEQSMFTAELIIKILNSLNREKLFIMAKKAYSLGIRNSTSKISKIIHDVSNKI.

Residues 13–15, Asn125, Arg161, Ser189, Ile242, 261–266, and Gln286 contribute to the UDP-N-acetyl-alpha-D-glucosamine site; these read SGG and ALTVSE.

Belongs to the glycosyltransferase 28 family. MurG subfamily.

The protein localises to the cell inner membrane. The catalysed reaction is di-trans,octa-cis-undecaprenyl diphospho-N-acetyl-alpha-D-muramoyl-L-alanyl-D-glutamyl-meso-2,6-diaminopimeloyl-D-alanyl-D-alanine + UDP-N-acetyl-alpha-D-glucosamine = di-trans,octa-cis-undecaprenyl diphospho-[N-acetyl-alpha-D-glucosaminyl-(1-&gt;4)]-N-acetyl-alpha-D-muramoyl-L-alanyl-D-glutamyl-meso-2,6-diaminopimeloyl-D-alanyl-D-alanine + UDP + H(+). It functions in the pathway cell wall biogenesis; peptidoglycan biosynthesis. Cell wall formation. Catalyzes the transfer of a GlcNAc subunit on undecaprenyl-pyrophosphoryl-MurNAc-pentapeptide (lipid intermediate I) to form undecaprenyl-pyrophosphoryl-MurNAc-(pentapeptide)GlcNAc (lipid intermediate II). The sequence is that of UDP-N-acetylglucosamine--N-acetylmuramyl-(pentapeptide) pyrophosphoryl-undecaprenol N-acetylglucosamine transferase from Buchnera aphidicola subsp. Schizaphis graminum (strain Sg).